The chain runs to 200 residues: Outer-membrane lipoprotein carrier protein (200 aa).

The first 18 residues, 1–18 (MIGLFLAAPLVLSSAVWA), serve as a signal peptide directing secretion.

The protein belongs to the LolA family. As to quaternary structure, monomer.

The protein localises to the periplasm. Participates in the translocation of lipoproteins from the inner membrane to the outer membrane. Only forms a complex with a lipoprotein if the residue after the N-terminal Cys is not an aspartate (The Asp acts as a targeting signal to indicate that the lipoprotein should stay in the inner membrane). In Photobacterium profundum (strain SS9), this protein is Outer-membrane lipoprotein carrier protein.